The primary structure comprises 214 residues: Adenylate kinase (214 aa).

An ATP-binding site is contributed by 10-15 (GAGKGT). The tract at residues 30–59 (STGDMFRDHKARGTEIGKQVQAIMDGGGLV) is NMP. AMP is bound by residues Thr-31, Arg-36, 57–59 (GLV), 85–88 (GYPR), and Gln-92. Residues 126-163 (GRRSCPRCGAVYHVSQNPPRRAGYCDRDDAELVQREDD) are LID. An ATP-binding site is contributed by Arg-127. Zn(2+)-binding residues include Cys-130 and Cys-133. An ATP-binding site is contributed by 136 to 137 (VY). Residues Cys-150 and Asp-153 each contribute to the Zn(2+) site. AMP contacts are provided by Arg-160 and Arg-171. Residue Gly-199 participates in ATP binding.

The protein belongs to the adenylate kinase family. In terms of assembly, monomer.

It is found in the cytoplasm. It carries out the reaction AMP + ATP = 2 ADP. The protein operates within purine metabolism; AMP biosynthesis via salvage pathway; AMP from ADP: step 1/1. Functionally, catalyzes the reversible transfer of the terminal phosphate group between ATP and AMP. Plays an important role in cellular energy homeostasis and in adenine nucleotide metabolism. This is Adenylate kinase from Anaeromyxobacter dehalogenans (strain 2CP-C).